The chain runs to 216 residues: Large ribosomal subunit protein uL3 (216 aa).

The protein belongs to the universal ribosomal protein uL3 family. Part of the 50S ribosomal subunit. Forms a cluster with proteins L14 and L19.

In terms of biological role, one of the primary rRNA binding proteins, it binds directly near the 3'-end of the 23S rRNA, where it nucleates assembly of the 50S subunit. This Symbiobacterium thermophilum (strain DSM 24528 / JCM 14929 / IAM 14863 / T) protein is Large ribosomal subunit protein uL3.